Reading from the N-terminus, the 473-residue chain is MNGLEATVSSFPSVKDSVPLTRTAVQRTKASVAVLHLGCEKNRVDTEHMLGLLAQAGYRVDGDEESANYVIVNTCSFIEAARRESVSTLMELAVQGKKIIIAGCLAQHFQEELLQEIPEAVAIVGTGDYHQIVQIIERVERGERVNAVTSSLDYIADETVPRYRTTHAPVAYLRVAEGCNYRCSFCIIPHLRGDQRSRSIESILREAEQLAEEGVQELILISQITTHYGIDLYGEPRLADLIRALGKIPIPWIRMLYAYPTGVTPAVVEAIQETPNFLPYLDLPLQHSHPQILKAMNRPWQGQVNDRVIERLRQALPNAVLRTSFIVGFPGETEEHFQHLLDFVQRHQFDHVGVFTFSPEEGTPAYHLPHQVPEAVKQERRARLMQVQQGITFRRNREQVGRVVPVLLEQENPRTGEWIGRSPRFAPEVDGVVYVQGQGSLGSLVPVQITRAEPYDLFGQVVAAPEGFSWSGR.

The MTTase N-terminal domain maps to 30 to 141; the sequence is ASVAVLHLGC…IVQIIERVER (112 aa). Cys-39, Cys-75, Cys-104, Cys-179, Cys-183, and Cys-186 together coordinate [4Fe-4S] cluster. In terms of domain architecture, Radical SAM core spans 165-394; the sequence is TTHAPVAYLR…MQVQQGITFR (230 aa). One can recognise a TRAM domain in the interval 397-463; sequence REQVGRVVPV…PYDLFGQVVA (67 aa).

The protein belongs to the methylthiotransferase family. RimO subfamily. The cofactor is [4Fe-4S] cluster.

It localises to the cytoplasm. The enzyme catalyses L-aspartate(89)-[ribosomal protein uS12]-hydrogen + (sulfur carrier)-SH + AH2 + 2 S-adenosyl-L-methionine = 3-methylsulfanyl-L-aspartate(89)-[ribosomal protein uS12]-hydrogen + (sulfur carrier)-H + 5'-deoxyadenosine + L-methionine + A + S-adenosyl-L-homocysteine + 2 H(+). In terms of biological role, catalyzes the methylthiolation of an aspartic acid residue of ribosomal protein uS12. This is Ribosomal protein uS12 methylthiotransferase RimO from Synechococcus sp. (strain JA-2-3B'a(2-13)) (Cyanobacteria bacterium Yellowstone B-Prime).